The following is a 184-amino-acid chain: MSEKQINNFSLISRLFGNLFYRFPTDKVLADAFVWLQQEGLSQVWALDTDKESELALNSLQVKIDLNLLNEEYQKLFATNGKVMTAISAYGIDVEEFVNFRLVRNMPEVESADHFALLLLTASWLEDNSDSLVAQQEFFETFLLPCAAKFLTQVENQATLPFYRALALLTREILATMADELEEE.

Belongs to the TorD/DmsD family.

This is an uncharacterized protein from Haemophilus influenzae (strain ATCC 51907 / DSM 11121 / KW20 / Rd).